A 193-amino-acid chain; its full sequence is Large ribosomal subunit protein bL25 (193 aa).

Belongs to the bacterial ribosomal protein bL25 family. CTC subfamily. Part of the 50S ribosomal subunit; part of the 5S rRNA/L5/L18/L25 subcomplex. Contacts the 5S rRNA. Binds to the 5S rRNA independently of L5 and L18.

Functionally, this is one of the proteins that binds to the 5S RNA in the ribosome where it forms part of the central protuberance. This Hydrogenovibrio crunogenus (strain DSM 25203 / XCL-2) (Thiomicrospira crunogena) protein is Large ribosomal subunit protein bL25.